The sequence spans 162 residues: Shikimate kinase (162 aa).

11-16 lines the ATP pocket; the sequence is GSGKSS. S15 is a Mg(2+) binding site. The substrate site is built by D33, R57, and G80. R116 serves as a coordination point for ATP. R132 is a binding site for substrate.

Belongs to the shikimate kinase family. As to quaternary structure, monomer. It depends on Mg(2+) as a cofactor.

It localises to the cytoplasm. It catalyses the reaction shikimate + ATP = 3-phosphoshikimate + ADP + H(+). It functions in the pathway metabolic intermediate biosynthesis; chorismate biosynthesis; chorismate from D-erythrose 4-phosphate and phosphoenolpyruvate: step 5/7. In terms of biological role, catalyzes the specific phosphorylation of the 3-hydroxyl group of shikimic acid using ATP as a cosubstrate. This chain is Shikimate kinase, found in Helicobacter pylori (strain J99 / ATCC 700824) (Campylobacter pylori J99).